Here is a 512-residue protein sequence, read N- to C-terminus: Glucose-1-phosphate adenylyltransferase small subunit 2, chloroplastic (512 aa).

The segment at M1–S21 is disordered. Residues M1 to A63 constitute a chloroplast transit peptide. Over residues S12–S21 the composition is skewed to low complexity.

It belongs to the bacterial/plant glucose-1-phosphate adenylyltransferase family. As to quaternary structure, heterotetramer. In terms of tissue distribution, leaves and seeds.

Its subcellular location is the plastid. It localises to the chloroplast. The catalysed reaction is alpha-D-glucose 1-phosphate + ATP + H(+) = ADP-alpha-D-glucose + diphosphate. Its pathway is glycan biosynthesis; starch biosynthesis. Activated by 3'phosphoglycerate, inhibited by orthophosphate. Allosteric regulation. In terms of biological role, this protein plays a role in synthesis of starch. It catalyzes the synthesis of the activated glycosyl donor, ADP-glucose from Glc-1-P and ATP. This Vicia faba (Broad bean) protein is Glucose-1-phosphate adenylyltransferase small subunit 2, chloroplastic (AGPP).